Consider the following 213-residue polypeptide: Major fimbrial subunit (213 aa).

A signal peptide spans 1-20; that stretch reads MKKTLLGSLILLAFAGNVQA. A disulfide bridge connects residues C41 and C81.

Belongs to the fimbrial protein family.

It is found in the fimbrium. Functionally, mediates adherence to oropharyngeal epithelial cells. Helps the airway colonization process. The sequence is that of Major fimbrial subunit (hifA) from Haemophilus influenzae.